Reading from the N-terminus, the 292-residue chain is 33 kDa chaperonin (292 aa).

Cystine bridges form between Cys-230-Cys-232 and Cys-263-Cys-266.

It belongs to the HSP33 family. Under oxidizing conditions two disulfide bonds are formed involving the reactive cysteines. Under reducing conditions zinc is bound to the reactive cysteines and the protein is inactive.

The protein localises to the cytoplasm. Redox regulated molecular chaperone. Protects both thermally unfolding and oxidatively damaged proteins from irreversible aggregation. Plays an important role in the bacterial defense system toward oxidative stress. This is 33 kDa chaperonin from Salmonella choleraesuis (strain SC-B67).